Consider the following 476-residue polypeptide: Chromosomal replication initiator protein DnaA (476 aa).

The interval 1-87 is domain I, interacts with DnaA modulators; the sequence is MSDRSDPTHA…AGVSNFAIVV (87 aa). Residues 87-131 are domain II; it reads VNPGIAQDAFAQHPEPAEQPYIETPTITAPTDNPGLPASPSRGDS. The domain III, AAA+ region stretch occupies residues 132–348; the sequence is RLNPKYGFDT…GTLIRVTAFA (217 aa). 4 residues coordinate ATP: glycine 176, glycine 178, lysine 179, and threonine 180. The tract at residues 349–476 is domain IV, binds dsDNA; it reads SLNKTPVDLA…IKQNHRYGKM (128 aa).

The protein belongs to the DnaA family. In terms of assembly, oligomerizes as a right-handed, spiral filament on DNA at oriC.

The protein resides in the cytoplasm. Its function is as follows. Plays an essential role in the initiation and regulation of chromosomal replication. ATP-DnaA binds to the origin of replication (oriC) to initiate formation of the DNA replication initiation complex once per cell cycle. Binds the DnaA box (a 9 base pair repeat at the origin) and separates the double-stranded (ds)DNA. Forms a right-handed helical filament on oriC DNA; dsDNA binds to the exterior of the filament while single-stranded (ss)DNA is stabiized in the filament's interior. The ATP-DnaA-oriC complex binds and stabilizes one strand of the AT-rich DNA unwinding element (DUE), permitting loading of DNA polymerase. After initiation quickly degrades to an ADP-DnaA complex that is not apt for DNA replication. Binds acidic phospholipids. This Clavibacter sepedonicus (Clavibacter michiganensis subsp. sepedonicus) protein is Chromosomal replication initiator protein DnaA.